Consider the following 184-residue polypeptide: Oligoribonuclease (184 aa).

Residues 9–172 (LIWIDLEMTG…DDIRESIEEL (164 aa)) enclose the Exonuclease domain. The active site involves Tyr-130.

The protein belongs to the oligoribonuclease family.

It is found in the cytoplasm. Functionally, 3'-to-5' exoribonuclease specific for small oligoribonucleotides. This chain is Oligoribonuclease, found in Actinobacillus pleuropneumoniae serotype 5b (strain L20).